Here is a 722-residue protein sequence, read N- to C-terminus: Protein Aster-A (722 aa).

The tract at residues 1–62 is disordered; it reads MFDTTPHSGR…KSGVSGTLST (62 aa). A compositionally biased stretch (low complexity) spans 8–18; the sequence is SGRSSPSSSPS. The GRAM domain maps to 93-160; sequence EDFRKLFSKL…KEVTCLKKEK (68 aa). Residues 256-336 form a disordered region; it reads ISPSGAADHS…DGPTSSLGPL (81 aa). Phosphoserine is present on residues Ser265, Ser269, Ser273, and Ser417. The region spanning 369–540 is the VASt domain; the sequence is SGRLLINSVF…ELAKAEKLSL (172 aa). Residues 561-600 are disordered; it reads LSWRGHRDGPQHPDPDPCTQTSMHTSGSLSSRFSEPSVDQ. The span at 565–575 shows a compositional bias: basic and acidic residues; that stretch reads GHRDGPQHPDP. Polar residues predominate over residues 578-594; that stretch reads CTQTSMHTSGSLSSRFS. The chain crosses the membrane as a helical span at residues 609–629; it reads ALVLISIVLIVLIALNALLFY.

As to expression, highly expressed in the brain.

Its subcellular location is the endoplasmic reticulum membrane. The protein resides in the cell membrane. The protein localises to the cytoplasmic vesicle. It is found in the autophagosome. Functionally, cholesterol transporter that mediates non-vesicular transport of cholesterol from the plasma membrane (PM) to the endoplasmic reticulum (ER). Contains unique domains for binding cholesterol and the PM, thereby serving as a molecular bridge for the transfer of cholesterol from the PM to the ER. Plays a crucial role in cholesterol homeostasis and has the unique ability to localize to the PM based on the level of membrane cholesterol. In lipid-poor conditions localizes to the ER membrane and in response to excess cholesterol in the PM is recruited to the endoplasmic reticulum-plasma membrane contact sites (EPCS) which is mediated by the GRAM domain. At the EPCS, the sterol-binding VASt/ASTER domain binds to the cholesterol in the PM and facilitates its transfer from the PM to ER. May play a role in tumor progression. Plays a role in autophagy regulation and is required for biogenesis of the autophagosome. This function in autophagy requires its cholesterol-transfer activity. This chain is Protein Aster-A, found in Mus musculus (Mouse).